Consider the following 198-residue polypeptide: Glycerol-3-phosphate acyltransferase (198 aa).

The next 6 helical transmembrane spans lie at tyrosine 5–isoleucine 25, valine 55–phenylalanine 75, glycine 79–leucine 99, valine 114–valine 134, tyrosine 139–isoleucine 159, and tyrosine 164–isoleucine 184.

The protein belongs to the PlsY family. As to quaternary structure, probably interacts with PlsX.

It is found in the cell membrane. It carries out the reaction an acyl phosphate + sn-glycerol 3-phosphate = a 1-acyl-sn-glycero-3-phosphate + phosphate. The protein operates within lipid metabolism; phospholipid metabolism. In terms of biological role, catalyzes the transfer of an acyl group from acyl-phosphate (acyl-PO(4)) to glycerol-3-phosphate (G3P) to form lysophosphatidic acid (LPA). This enzyme utilizes acyl-phosphate as fatty acyl donor, but not acyl-CoA or acyl-ACP. The polypeptide is Glycerol-3-phosphate acyltransferase (Finegoldia magna (strain ATCC 29328 / DSM 20472 / WAL 2508) (Peptostreptococcus magnus)).